A 100-amino-acid polypeptide reads, in one-letter code: ATP synthase subunit c (100 aa).

The next 2 helical transmembrane spans lie at 27–47 (SVIAGGIGLGLAALGGAIGMG) and 72–92 (FIALAMIEAQVIYALVITLIV).

The protein belongs to the ATPase C chain family. As to quaternary structure, F-type ATPases have 2 components, F(1) - the catalytic core - and F(0) - the membrane proton channel. F(1) has five subunits: alpha(3), beta(3), gamma(1), delta(1), epsilon(1). F(0) has three main subunits: a(1), b(2) and c(10-14). The alpha and beta chains form an alternating ring which encloses part of the gamma chain. F(1) is attached to F(0) by a central stalk formed by the gamma and epsilon chains, while a peripheral stalk is formed by the delta and b chains.

Its subcellular location is the cell inner membrane. Its function is as follows. F(1)F(0) ATP synthase produces ATP from ADP in the presence of a proton or sodium gradient. F-type ATPases consist of two structural domains, F(1) containing the extramembraneous catalytic core and F(0) containing the membrane proton channel, linked together by a central stalk and a peripheral stalk. During catalysis, ATP synthesis in the catalytic domain of F(1) is coupled via a rotary mechanism of the central stalk subunits to proton translocation. Key component of the F(0) channel; it plays a direct role in translocation across the membrane. A homomeric c-ring of between 10-14 subunits forms the central stalk rotor element with the F(1) delta and epsilon subunits. The sequence is that of ATP synthase subunit c from Campylobacter concisus (strain 13826).